We begin with the raw amino-acid sequence, 488 residues long: Cobyric acid synthase (488 aa).

The GATase cobBQ-type domain maps to 252 to 440; it reads VPLIAVLRFP…VHGLFANDRQ (189 aa). The active-site Nucleophile is C334. H432 is a catalytic residue.

This sequence belongs to the CobB/CobQ family. CobQ subfamily.

The protein operates within cofactor biosynthesis; adenosylcobalamin biosynthesis. In terms of biological role, catalyzes amidations at positions B, D, E, and G on adenosylcobyrinic A,C-diamide. NH(2) groups are provided by glutamine, and one molecule of ATP is hydrogenolyzed for each amidation. In Methylorubrum populi (strain ATCC BAA-705 / NCIMB 13946 / BJ001) (Methylobacterium populi), this protein is Cobyric acid synthase.